The sequence spans 222 residues: MEQKRYALIVAGGHGLRMGADRPKQFLLLAGLPVLMHTLNRFAPHVDAIVLVLPTDHHAYWQELCRKYDFSVSHRVVAGGNTRFASVRNGLQVVPDGVLVAVHDGVRPLVSAETIDACFDLAELKGAVAPCRPMTESLRYYATDGNYAVDRSRYVTVQTPQTFRSEWLREAYRQPYEEYFTDDCSVYEHHFGRPVALIVGNIENIKLTTPLDLSLAKLLLTS.

It belongs to the IspD/TarI cytidylyltransferase family. IspD subfamily.

The catalysed reaction is 2-C-methyl-D-erythritol 4-phosphate + CTP + H(+) = 4-CDP-2-C-methyl-D-erythritol + diphosphate. The protein operates within isoprenoid biosynthesis; isopentenyl diphosphate biosynthesis via DXP pathway; isopentenyl diphosphate from 1-deoxy-D-xylulose 5-phosphate: step 2/6. Catalyzes the formation of 4-diphosphocytidyl-2-C-methyl-D-erythritol from CTP and 2-C-methyl-D-erythritol 4-phosphate (MEP). The sequence is that of 2-C-methyl-D-erythritol 4-phosphate cytidylyltransferase from Porphyromonas gingivalis (strain ATCC BAA-308 / W83).